A 147-amino-acid polypeptide reads, in one-letter code: MKIVIQRVKEASVSIDGEIAGAIDQGLLLLVGIGPDDQAEDIDYAVRKISHMRIFSDPEGKMNLSIQDIGGSVLSVSQFTLYADTKKGNRPAFTGAAKPAMASELYDTFNAQLEQLVPVQRGVFGADMQISLTNDGPVTIILDTKHR.

Residues G136 to P137 carry the Gly-cisPro motif, important for rejection of L-amino acids motif.

This sequence belongs to the DTD family. As to quaternary structure, homodimer.

The protein localises to the cytoplasm. It carries out the reaction glycyl-tRNA(Ala) + H2O = tRNA(Ala) + glycine + H(+). It catalyses the reaction a D-aminoacyl-tRNA + H2O = a tRNA + a D-alpha-amino acid + H(+). Functionally, an aminoacyl-tRNA editing enzyme that deacylates mischarged D-aminoacyl-tRNAs. Also deacylates mischarged glycyl-tRNA(Ala), protecting cells against glycine mischarging by AlaRS. Acts via tRNA-based rather than protein-based catalysis; rejects L-amino acids rather than detecting D-amino acids in the active site. By recycling D-aminoacyl-tRNA to D-amino acids and free tRNA molecules, this enzyme counteracts the toxicity associated with the formation of D-aminoacyl-tRNA entities in vivo and helps enforce protein L-homochirality. The polypeptide is D-aminoacyl-tRNA deacylase (Streptococcus equi subsp. zooepidemicus (strain H70)).